We begin with the raw amino-acid sequence, 757 residues long: E3 ubiquitin-protein ligase RNF12-B (757 aa).

Polar residues predominate over residues 1 to 10 (MESADSTGKG). Disordered stretches follow at residues 1–29 (MESA…LDRE), 68–519 (LQQI…TYES), and 619–652 (EPAE…GGVT). Low complexity predominate over residues 11-21 (STEQSESQRQS). Polar residues-rich tracts occupy residues 110–138 (SVRQ…NPNS) and 147–163 (INVN…SLDQ). 21 consecutive repeat copies span residues 197-202 (PESVDE), 203-208 (PVSVAE), 209-214 (PVSVAE), 215-220 (PVSVAE), 221-226 (PESVAE), 227-232 (PESVAA), 237-242 (PESVPE), 243-248 (PESVPE), 249-254 (PESVPE), 255-260 (PESVPE), 261-266 (PESVPE), 267-272 (PESVPE), 273-278 (PESVPE), 279-284 (PESVPE), 285-290 (PESVPE), 291-296 (PESVPE), 297-302 (PESVPE), 303-308 (PESVPE), 309-314 (PESIAE), 315-320 (PESVPV), and 321-326 (PESVPV). A 21 X 6 AA approximate repeats of P-[EV]-S-V-[PA]-[EV] region spans residues 197–326 (PESVDEPVSV…SVPVPESVPV (130 aa)). Low complexity predominate over residues 202 to 237 (EPVSVAEPVSVAEPVSVAEPESVAEPESVAASVPVP). The span at 245–313 (SVPEPESVPE…ESVPEPESIA (69 aa)) shows a compositional bias: acidic residues. Residues 314 to 327 (EPESVPVPESVPVA) are compositionally biased toward low complexity. The span at 352–367 (RSPDQRRTRARTDRSR) shows a compositional bias: basic and acidic residues. A compositionally biased stretch (polar residues) spans 383-392 (HSSSQTVDAS). Positions 408-424 (SSQVHSSSSNETEGSSR) are enriched in low complexity. Residues 428-452 (HITARQQALGTEGQSQSTVHLSNPE) show a composition bias toward polar residues. Over residues 453 to 466 (SRSSSQTPQTDSPS) the composition is skewed to low complexity. The span at 467–476 (NAETTGTGQR) shows a compositional bias: polar residues. Residues 490–500 (RPGDYRQRDSI) are compositionally biased toward basic and acidic residues. Residues 501-517 (ANRTRSRSQTPNNTVTY) are compositionally biased toward polar residues. Residues 703 to 744 (CSVCITEYTEGNKLRKLPCSHEYHIHCIDRWLSENSTCPICR) form an RING-type; atypical zinc finger. The PDZ-binding motif lies at 754 to 757 (ESIV).

It belongs to the RNF12 family. Forms homodimers through the C-terminal region. The N-terminus interacts with the homeobox of LIM/homeobox factor lhx1/lim1, with lhx3/lim3 and lhx5/lim5, and with the N-terminus of ldb1. As to expression, shows overlapping expression with lhx1/lim1 and ldb1 in the gastrula mesoderm, and expression overlaps with ldb1 throughout early embryogenesis. After gastrulation, expression is gradually restricted to tissues originated from the ectoderm, the neuroectoderm, neural crest and epidermis, and subsequently to the neural tube as well as the head and tailbud region.

It localises to the nucleus. The enzyme catalyses S-ubiquitinyl-[E2 ubiquitin-conjugating enzyme]-L-cysteine + [acceptor protein]-L-lysine = [E2 ubiquitin-conjugating enzyme]-L-cysteine + N(6)-ubiquitinyl-[acceptor protein]-L-lysine.. Its pathway is protein modification; protein ubiquitination. Functionally, acts as an E3 ubiquitin-protein ligase specific for ldb1, mediating ubiquitination and proteasome-dependent degradation of excess ldb1 in a RING-dependent manner. Does not degrade ldb1 bound to lhx1/lim1, nor lim1 itself and thus contributes to the establishment of proper ldb1-lhx1/lim1 stoichiometry and the formation of a ldb1-lhx1/lim1 complex. Interferes with Spemann organizer function and suppresses secondary axis formation induced by ldb1 and lhx1/lim1. In Xenopus laevis (African clawed frog), this protein is E3 ubiquitin-protein ligase RNF12-B (rnf12-b).